A 135-amino-acid polypeptide reads, in one-letter code: Ribosome-binding factor A (135 aa).

Belongs to the RbfA family. As to quaternary structure, monomer. Binds 30S ribosomal subunits, but not 50S ribosomal subunits or 70S ribosomes.

The protein localises to the cytoplasm. In terms of biological role, one of several proteins that assist in the late maturation steps of the functional core of the 30S ribosomal subunit. Associates with free 30S ribosomal subunits (but not with 30S subunits that are part of 70S ribosomes or polysomes). Required for efficient processing of 16S rRNA. May interact with the 5'-terminal helix region of 16S rRNA. The sequence is that of Ribosome-binding factor A from Aliivibrio fischeri (strain ATCC 700601 / ES114) (Vibrio fischeri).